A 187-amino-acid chain; its full sequence is Photosystem I assembly protein Ycf4 (187 aa).

Transmembrane regions (helical) follow at residues 23–43 and 70–90; these read INYF…IVGI and FYGI…ILGV.

Belongs to the Ycf4 family.

The protein resides in the plastid. It localises to the chloroplast thylakoid membrane. Functionally, seems to be required for the assembly of the photosystem I complex. The polypeptide is Photosystem I assembly protein Ycf4 (Chara vulgaris (Common stonewort)).